The following is a 330-amino-acid chain: Beta-hexosaminidase (330 aa).

Substrate contacts are provided by residues Asp-62, Arg-70, Arg-133, and Lys-163–His-164. The active-site Proton donor/acceptor is His-176. Asp-246 acts as the Nucleophile in catalysis.

Belongs to the glycosyl hydrolase 3 family. NagZ subfamily.

The protein localises to the cytoplasm. The enzyme catalyses Hydrolysis of terminal non-reducing N-acetyl-D-hexosamine residues in N-acetyl-beta-D-hexosaminides.. It participates in cell wall biogenesis; peptidoglycan recycling. In terms of biological role, plays a role in peptidoglycan recycling by cleaving the terminal beta-1,4-linked N-acetylglucosamine (GlcNAc) from peptide-linked peptidoglycan fragments, giving rise to free GlcNAc, anhydro-N-acetylmuramic acid and anhydro-N-acetylmuramic acid-linked peptides. This is Beta-hexosaminidase from Idiomarina loihiensis (strain ATCC BAA-735 / DSM 15497 / L2-TR).